The following is a 378-amino-acid chain: Lipid-A-disaccharide synthase (378 aa).

This sequence belongs to the LpxB family.

The catalysed reaction is a lipid X + a UDP-2-N,3-O-bis[(3R)-3-hydroxyacyl]-alpha-D-glucosamine = a lipid A disaccharide + UDP + H(+). It functions in the pathway bacterial outer membrane biogenesis; LPS lipid A biosynthesis. In terms of biological role, condensation of UDP-2,3-diacylglucosamine and 2,3-diacylglucosamine-1-phosphate to form lipid A disaccharide, a precursor of lipid A, a phosphorylated glycolipid that anchors the lipopolysaccharide to the outer membrane of the cell. The polypeptide is Lipid-A-disaccharide synthase (Pseudomonas aeruginosa (strain LESB58)).